The primary structure comprises 507 residues: ATP synthase subunit alpha, chloroplastic (507 aa).

Residue 170-177 participates in ATP binding; that stretch reads GDRQTGKT. Position 257 is a phosphothreonine (threonine 257).

The protein belongs to the ATPase alpha/beta chains family. F-type ATPases have 2 components, CF(1) - the catalytic core - and CF(0) - the membrane proton channel. CF(1) has five subunits: alpha(3), beta(3), gamma(1), delta(1), epsilon(1). CF(0) has four main subunits: a, b, b' and c.

It localises to the plastid. The protein resides in the chloroplast thylakoid membrane. The enzyme catalyses ATP + H2O + 4 H(+)(in) = ADP + phosphate + 5 H(+)(out). In terms of biological role, produces ATP from ADP in the presence of a proton gradient across the membrane. The alpha chain is a regulatory subunit. The polypeptide is ATP synthase subunit alpha, chloroplastic (Aethionema grandiflorum (Persian stone-cress)).